A 333-amino-acid chain; its full sequence is Adenosine deaminase (333 aa).

Zn(2+) contacts are provided by His-12 and His-14. Substrate contacts are provided by His-14, Asp-16, and Gly-170. Residue His-197 participates in Zn(2+) binding. Glu-200 functions as the Proton donor in the catalytic mechanism. Asp-278 contacts Zn(2+). Substrate is bound at residue Asp-279.

The protein belongs to the metallo-dependent hydrolases superfamily. Adenosine and AMP deaminases family. Adenosine deaminase subfamily. Zn(2+) is required as a cofactor.

The enzyme catalyses adenosine + H2O + H(+) = inosine + NH4(+). It carries out the reaction 2'-deoxyadenosine + H2O + H(+) = 2'-deoxyinosine + NH4(+). Catalyzes the hydrolytic deamination of adenosine and 2-deoxyadenosine. In Salmonella gallinarum (strain 287/91 / NCTC 13346), this protein is Adenosine deaminase.